The following is an 872-amino-acid chain: DNA mismatch repair protein MutS (872 aa).

602 to 609 (GPNMSGKS) contributes to the ATP binding site.

The protein belongs to the DNA mismatch repair MutS family.

Functionally, this protein is involved in the repair of mismatches in DNA. It is possible that it carries out the mismatch recognition step. This protein has a weak ATPase activity. This Staphylococcus aureus (strain bovine RF122 / ET3-1) protein is DNA mismatch repair protein MutS.